The sequence spans 113 residues: MGNKFRGGMPGMGNMGNMMKQMQKMQRQMEETQKRLEETEVTATSGGGAIEVVANGKKEIVSIKIDEDLVKDGDVEMLQDMVMVAVNDAIKKVLDMSESELGKITGGINIPGF.

The tract at residues 1–44 (MGNKFRGGMPGMGNMGNMMKQMQKMQRQMEETQKRLEETEVTAT) is disordered. Over residues 15–26 (MGNMMKQMQKMQ) the composition is skewed to low complexity. The span at 27–38 (RQMEETQKRLEE) shows a compositional bias: basic and acidic residues.

It belongs to the YbaB/EbfC family. In terms of assembly, homodimer.

The protein localises to the cytoplasm. The protein resides in the nucleoid. Functionally, binds to DNA and alters its conformation. May be involved in regulation of gene expression, nucleoid organization and DNA protection. This is Nucleoid-associated protein FMG_0513 from Finegoldia magna (strain ATCC 29328 / DSM 20472 / WAL 2508) (Peptostreptococcus magnus).